Here is a 76-residue protein sequence, read N- to C-terminus: Alpha/kappa-conotoxin-like fe14.2 (76 aa).

The first 24 residues, M1 to P24, serve as a signal peptide directing secretion. Positions G25 to R39 are excised as a propeptide. Disulfide bonds link C46–C61 and C50–C63. R64 carries the arginine amide modification. A propeptide spanning residues G65–V76 is cleaved from the precursor.

Belongs to the conotoxin J superfamily. Expressed by the venom duct.

It localises to the secreted. Highly inhibits both nicotinic acetylcholine receptors (neuronal (alpha-3/beta-4) and muscular (alpha-1/beta-1/epsilon/delta) subtypes) and the voltage-gated potassium channel Kv1.6/KCNA6 subtype. The polypeptide is Alpha/kappa-conotoxin-like fe14.2 (Conus ferrugineus (Cone snail)).